The chain runs to 782 residues: Gelsolin (782 aa).

The N-terminal stretch at 1-27 (MAPHRPAPALLCALSLALCALSLPVRA) is a signal peptide. Residues 53 to 176 (VVEHPEFLKA…YKKGGVASGF (124 aa)) are actin-severing. A Gelsolin-like 1 repeat occupies 76–158 (FDLVPVPTNL…VQGFESATFL (83 aa)). Tyr-86 carries the phosphotyrosine; by SRC; in vitro modification. Residues Gly-92, Asp-93, Glu-124, Asp-136, Gly-141, and Ala-143 each contribute to the Ca(2+) site. The interval 123–126 (DESG) is actin-actin interfilament contact point. 162-169 (KSGLKYKK) contacts a 1,2-diacyl-sn-glycero-3-phospho-(1D-myo-inositol-4,5-bisphosphate). Ca(2+) is bound at residue Val-172. An a 1,2-diacyl-sn-glycero-3-phospho-(1D-myo-inositol-4,5-bisphosphate)-binding site is contributed by 188–196 (RLFQVKGRR). The Gelsolin-like 2 repeat unit spans residues 198 to 270 (VRATEVPVSW…SEEGTEPEAM (73 aa)). Ca(2+) contacts are provided by Gly-213 and Asp-214. Cys-215 and Cys-228 are disulfide-bonded. Position 236 (Glu-236) interacts with Ca(2+). Basic and acidic residues predominate over residues 247–262 (IRDNERSGRARVHVSE). The segment at 247-285 (IRDNERSGRARVHVSEEGTEPEAMLQVLGPKPALPAGTE) is disordered. Ca(2+) is bound by residues Asp-286, Glu-329, Asp-330, and Glu-354. The stretch at 317 to 389 (DENPFAQGAL…LPEGGETPLF (73 aa)) is one Gelsolin-like 3 repeat. Tyr-409 carries the post-translational modification Phosphotyrosine; by SRC; in vitro. The segment at 434–782 (AAQHGMDDDG…LDRAMAELAA (349 aa)) is actin-binding, Ca-sensitive. One copy of the Gelsolin-like 4 repeat lies at 455–536 (SNKVPVDPAT…VQGKEPAHLM (82 aa)). Residue Tyr-465 is modified to Phosphotyrosine; by SRC. Ca(2+) contacts are provided by Gly-471, Asp-472, Glu-502, Asp-514, Gly-519, Pro-521, and Thr-551. A Gelsolin-like 5 repeat occupies 576-642 (TRAVEVLPKA…AEGSEPDGFW (67 aa)). Lys-584 bears the N6-acetyllysine mark. Ca(2+)-binding residues include Asn-591 and Asp-592. A Phosphotyrosine; by SRC; in vitro modification is found at Tyr-603. Residue Glu-614 coordinates Ca(2+). At Tyr-651 the chain carries Phosphotyrosine; by SRC; in vitro. A Gelsolin-like 6 repeat occupies 681–756 (IEEVPGELMQ…VKQGFEPPSF (76 aa)). Residues Asp-696, Asp-697, and Glu-719 each contribute to the Ca(2+) site. At Thr-742 the chain carries Phosphothreonine.

The protein belongs to the villin/gelsolin family. Binds to actin and to fibronectin. Identified in a complex composed of ACTA1, COBL, GSN and TMSB4X. Interacts with the inactive form of EIF2AK2/PKR. Interacts with FLII. Phosphorylation on Tyr-86, Tyr-409, Tyr-465, Tyr-603 and Tyr-651 in vitro is induced in presence of phospholipids. Phagocytic cells, platelets, fibroblasts, nonmuscle cells, smooth and skeletal muscle cells.

The protein localises to the cytoplasm. The protein resides in the cytoskeleton. Its subcellular location is the secreted. Calcium-regulated, actin-modulating protein that binds to the plus (or barbed) ends of actin monomers or filaments, preventing monomer exchange (end-blocking or capping). It can promote the assembly of monomers into filaments (nucleation) as well as sever filaments already formed. Plays a role in ciliogenesis. The sequence is that of Gelsolin (GSN) from Homo sapiens (Human).